Reading from the N-terminus, the 180-residue chain is Adenine phosphoribosyltransferase (180 aa).

The protein belongs to the purine/pyrimidine phosphoribosyltransferase family. As to quaternary structure, homodimer.

Its subcellular location is the cytoplasm. The enzyme catalyses AMP + diphosphate = 5-phospho-alpha-D-ribose 1-diphosphate + adenine. The protein operates within purine metabolism; AMP biosynthesis via salvage pathway; AMP from adenine: step 1/1. Catalyzes a salvage reaction resulting in the formation of AMP, that is energically less costly than de novo synthesis. In Haemophilus influenzae (strain PittEE), this protein is Adenine phosphoribosyltransferase.